We begin with the raw amino-acid sequence, 475 residues long: Putative poly(A) polymerase catalytic subunit (475 aa).

It belongs to the poxviridae poly(A) polymerase catalytic subunit family. Highly divergent.

The protein localises to the virion. It catalyses the reaction RNA(n) + ATP = RNA(n)-3'-adenine ribonucleotide + diphosphate. Its function is as follows. Polymerase that creates the 3'-poly(A) tail of mRNAs. The sequence is that of Putative poly(A) polymerase catalytic subunit from Ornithodoros (relapsing fever ticks).